A 445-amino-acid polypeptide reads, in one-letter code: MRLSRYFLPVLKETPAEAQIVSHRLMLRAGMIKQASAGIYSWLPLGYKVLRRIEEIVHEEQQRAGHIPMLMPTLQSADLWRESGRYDDYGQEMLRITDRHGRDMLYGPTNEELITDIFRSNVGSYKDLPLTLYHIQWKFRDEVRPRFGVMRGREFLMKDGYNFDLTKEAALHAYNRHLVSYLRSYERMGLQAIPMRADGGPIGGDYTHEFLVLAETGESEVFYDAEITDLSFGDRQIDYDDVGQCQAVLEEFTSRYARTDETHDPDAFAKVPEARRRSARGIEVGQIFYFGTKYSDAMGATVIDKDQNQVPVHMGSHGIGVSRLLGAIIEASHDDKGIIWPEGVTPFHCGIVNLKQGDAAADAACEGLYDALTKAGLEPLYDDRNERAGGKFATMDLIGLPWRITVGPRGLKAGVVELTSRKTGESEELSPEAAVAKVVARYAGA.

It belongs to the class-II aminoacyl-tRNA synthetase family. ProS type 2 subfamily. As to quaternary structure, homodimer.

It localises to the cytoplasm. The enzyme catalyses tRNA(Pro) + L-proline + ATP = L-prolyl-tRNA(Pro) + AMP + diphosphate. Catalyzes the attachment of proline to tRNA(Pro) in a two-step reaction: proline is first activated by ATP to form Pro-AMP and then transferred to the acceptor end of tRNA(Pro). This chain is Proline--tRNA ligase, found in Dinoroseobacter shibae (strain DSM 16493 / NCIMB 14021 / DFL 12).